The sequence spans 418 residues: Mitochondrial outer membrane protein SLC25A46 (418 aa).

2 positions are modified to phosphoserine: serine 32 and serine 35. At threonine 45 the chain carries Phosphothreonine. Positions 46 to 96 are disordered; the sequence is PPDIPGSRNLHWGEKSPSYGVPSAPPTLEGSAEEPFPGGGEGPRPGPSSEQ. Residues 96–187 form a Solcar 1 repeat; the sequence is QLNRFAGFGI…GIISEFTPLP (92 aa). 6 consecutive transmembrane segments (helical) span residues 103–123, 167–187, 202–222, 258–278, 314–334, and 382–402; these read FGIGLASLFTENVLAHPCIVL, FIVQGVTLGAEGIISEFTPLP, HLLLKCLTYMVAMPFYSASLI, LLPLFSLIFPTVLHGVLHYII, FPELIANFAASLCSDVILYPL, and VFGFYKGFGAVIIQYTLHATI. One copy of the Solcar 2 repeat lies at 311–413; it reads DAYFPELIAN…QITKMIYSTL (103 aa).

Belongs to the mitochondrial carrier (TC 2.A.29) family. In terms of assembly, associates with the mitochondrial contact site and cristae organizing system (MICOS) complex. May associate with the endoplasmic reticulum membrane protein complex (EMC).

The protein resides in the mitochondrion outer membrane. Transmembrane protein of the mitochondrial outer membrane that controls mitochondrial organization. May regulate the assembly of the MICOS (mitochondrial contact site and cristae organizing system) complex which is essential to the biogenesis and dynamics of mitochondrial cristae, the inwards folds of the inner mitochondrial membrane. Through its interaction with the EMC (endoplasmic reticulum membrane protein complex), could regulate mitochondrial lipid homeostasis and thereby mitochondrial fission. This is Mitochondrial outer membrane protein SLC25A46 from Mus musculus (Mouse).